Reading from the N-terminus, the 689-residue chain is Glycine--tRNA ligase beta subunit (689 aa).

The protein belongs to the class-II aminoacyl-tRNA synthetase family. In terms of assembly, tetramer of two alpha and two beta subunits.

Its subcellular location is the cytoplasm. It carries out the reaction tRNA(Gly) + glycine + ATP = glycyl-tRNA(Gly) + AMP + diphosphate. This chain is Glycine--tRNA ligase beta subunit, found in Serratia proteamaculans (strain 568).